The primary structure comprises 830 residues: DNA gyrase subunit A (830 aa).

The region spanning 33–497 (LPDVRDGLKP…AENDIDIEDL (465 aa)) is the Topo IIA-type catalytic domain. Tyr-121 (O-(5'-phospho-DNA)-tyrosine intermediate) is an active-site residue. The short motif at 524–530 (QKRGGRG) is the GyrA-box element. The segment at 805 to 830 (KDDSEQLEDSEEVSEVHDAEENNSEE) is disordered.

This sequence belongs to the type II topoisomerase GyrA/ParC subunit family. Heterotetramer, composed of two GyrA and two GyrB chains. In the heterotetramer, GyrA contains the active site tyrosine that forms a transient covalent intermediate with DNA, while GyrB binds cofactors and catalyzes ATP hydrolysis.

Its subcellular location is the cytoplasm. The catalysed reaction is ATP-dependent breakage, passage and rejoining of double-stranded DNA.. Its function is as follows. A type II topoisomerase that negatively supercoils closed circular double-stranded (ds) DNA in an ATP-dependent manner to modulate DNA topology and maintain chromosomes in an underwound state. Negative supercoiling favors strand separation, and DNA replication, transcription, recombination and repair, all of which involve strand separation. Also able to catalyze the interconversion of other topological isomers of dsDNA rings, including catenanes and knotted rings. Type II topoisomerases break and join 2 DNA strands simultaneously in an ATP-dependent manner. The protein is DNA gyrase subunit A of Clostridium acetobutylicum (strain ATCC 824 / DSM 792 / JCM 1419 / IAM 19013 / LMG 5710 / NBRC 13948 / NRRL B-527 / VKM B-1787 / 2291 / W).